A 90-amino-acid chain; its full sequence is RNA-binding protein Hfq (90 aa).

The region spanning 9-69 is the Sm domain; it reads DRFLNHLRVN…ISTIIPSSYV (61 aa).

Belongs to the Hfq family. As to quaternary structure, homohexamer.

Functionally, RNA chaperone that binds small regulatory RNA (sRNAs) and mRNAs to facilitate mRNA translational regulation in response to envelope stress, environmental stress and changes in metabolite concentrations. Also binds with high specificity to tRNAs. The chain is RNA-binding protein Hfq from Thermotoga sp. (strain RQ2).